The primary structure comprises 219 residues: Thiamine-phosphate synthase (219 aa).

4-amino-2-methyl-5-(diphosphooxymethyl)pyrimidine contacts are provided by residues 44–48 (QFREK) and Asn-79. The Mg(2+) site is built by Asp-80 and Asp-99. Residue Ser-117 participates in 4-amino-2-methyl-5-(diphosphooxymethyl)pyrimidine binding. Position 143-145 (143-145 (TST)) interacts with 2-[(2R,5Z)-2-carboxy-4-methylthiazol-5(2H)-ylidene]ethyl phosphate. A 4-amino-2-methyl-5-(diphosphooxymethyl)pyrimidine-binding site is contributed by Lys-146. Residues Gly-175 and 195 to 196 (IS) contribute to the 2-[(2R,5Z)-2-carboxy-4-methylthiazol-5(2H)-ylidene]ethyl phosphate site.

It belongs to the thiamine-phosphate synthase family. Requires Mg(2+) as cofactor.

It catalyses the reaction 2-[(2R,5Z)-2-carboxy-4-methylthiazol-5(2H)-ylidene]ethyl phosphate + 4-amino-2-methyl-5-(diphosphooxymethyl)pyrimidine + 2 H(+) = thiamine phosphate + CO2 + diphosphate. The enzyme catalyses 2-(2-carboxy-4-methylthiazol-5-yl)ethyl phosphate + 4-amino-2-methyl-5-(diphosphooxymethyl)pyrimidine + 2 H(+) = thiamine phosphate + CO2 + diphosphate. It carries out the reaction 4-methyl-5-(2-phosphooxyethyl)-thiazole + 4-amino-2-methyl-5-(diphosphooxymethyl)pyrimidine + H(+) = thiamine phosphate + diphosphate. The protein operates within cofactor biosynthesis; thiamine diphosphate biosynthesis; thiamine phosphate from 4-amino-2-methyl-5-diphosphomethylpyrimidine and 4-methyl-5-(2-phosphoethyl)-thiazole: step 1/1. Functionally, condenses 4-methyl-5-(beta-hydroxyethyl)thiazole monophosphate (THZ-P) and 2-methyl-4-amino-5-hydroxymethyl pyrimidine pyrophosphate (HMP-PP) to form thiamine monophosphate (TMP). This chain is Thiamine-phosphate synthase, found in Bacillus cereus (strain AH187).